Consider the following 373-residue polypeptide: Spermidine/putrescine import ATP-binding protein PotA (373 aa).

The ABC transporter domain maps to 8–238 (FELRGVSKYF…PANLYVARFV (231 aa)). 40 to 47 (GPSGCGKT) serves as a coordination point for ATP.

Belongs to the ABC transporter superfamily. Spermidine/putrescine importer (TC 3.A.1.11.1) family. In terms of assembly, the complex is composed of two ATP-binding proteins (PotA), two transmembrane proteins (PotB and PotC) and a solute-binding protein (PotD).

Its subcellular location is the cell inner membrane. It carries out the reaction ATP + H2O + polyamine-[polyamine-binding protein]Side 1 = ADP + phosphate + polyamineSide 2 + [polyamine-binding protein]Side 1.. Part of the ABC transporter complex PotABCD involved in spermidine/putrescine import. Responsible for energy coupling to the transport system. The protein is Spermidine/putrescine import ATP-binding protein PotA of Oleidesulfovibrio alaskensis (strain ATCC BAA-1058 / DSM 17464 / G20) (Desulfovibrio alaskensis).